The primary structure comprises 293 residues: tRNA pseudouridine synthase B (293 aa).

Catalysis depends on aspartate 39, which acts as the Nucleophile.

This sequence belongs to the pseudouridine synthase TruB family. Type 1 subfamily.

The catalysed reaction is uridine(55) in tRNA = pseudouridine(55) in tRNA. Functionally, responsible for synthesis of pseudouridine from uracil-55 in the psi GC loop of transfer RNAs. In Thermobifida fusca (strain YX), this protein is tRNA pseudouridine synthase B.